The sequence spans 443 residues: Xaa-Pro dipeptidase (443 aa).

Positions 246, 257, 339, 384, and 423 each coordinate Mn(2+).

This sequence belongs to the peptidase M24B family. Bacterial-type prolidase subfamily. Mn(2+) is required as a cofactor.

It catalyses the reaction Xaa-L-Pro dipeptide + H2O = an L-alpha-amino acid + L-proline. Functionally, splits dipeptides with a prolyl residue in the C-terminal position. The protein is Xaa-Pro dipeptidase of Escherichia coli (strain 55989 / EAEC).